The chain runs to 112 residues: Cytochrome c2 (112 aa).

Positions 14, 17, 18, and 91 each coordinate heme c.

It belongs to the cytochrome c family. Binds 1 heme c group covalently per subunit.

Functionally, cytochrome c2 is found mainly in purple, non-sulfur, photosynthetic bacteria where it functions as the electron donor to the oxidized bacteriochlorophyll in the photophosphorylation pathway. However, it may also have a role in the respiratory chain and is found in some non-photosynthetic bacteria. The polypeptide is Cytochrome c2 (cycA) (Rhodospirillum rubrum).